A 348-amino-acid chain; its full sequence is Methylthioribose-1-phosphate isomerase (348 aa).

Residues 53–55 (RGA), R93, and Q197 contribute to the substrate site. D238 functions as the Proton donor in the catalytic mechanism. 248 to 249 (NK) contacts substrate.

Belongs to the eIF-2B alpha/beta/delta subunits family. MtnA subfamily.

The enzyme catalyses 5-(methylsulfanyl)-alpha-D-ribose 1-phosphate = 5-(methylsulfanyl)-D-ribulose 1-phosphate. The protein operates within amino-acid biosynthesis; L-methionine biosynthesis via salvage pathway; L-methionine from S-methyl-5-thio-alpha-D-ribose 1-phosphate: step 1/6. Functionally, catalyzes the interconversion of methylthioribose-1-phosphate (MTR-1-P) into methylthioribulose-1-phosphate (MTRu-1-P). The polypeptide is Methylthioribose-1-phosphate isomerase (Gloeobacter violaceus (strain ATCC 29082 / PCC 7421)).